The following is a 303-amino-acid chain: MRLRHVVSSLDLTRDDYFRIFELADKFSNVKKLNYLSGKVVSLAFFEPSTRTAQSFHTAAIKLGADVIGFASEESTSIAKGENLADTIRMLNNYSNCIVMRHKFDGAALFASEISDIPIINAGDGKHEHPTQALIDLYTIYKVFGEIDGRTFGLLGDLKYARTVNSLLRALTRFKPKKIFLISPSQLKVRREILDGLNYPVIETENPYDVIQDIDVLYVTRIQKERFVDELEYEKVKESYVVDLKLVNMMKKDGIILHPLPRVTEIDRKVDKTTNAKYFYQASLAVPVRMALFYEVLGERKDD.

Positions 51 and 52 each coordinate carbamoyl phosphate. Lys-80 lines the L-aspartate pocket. Arg-101, His-129, and Gln-132 together coordinate carbamoyl phosphate. L-aspartate-binding residues include Arg-162 and Arg-221. Carbamoyl phosphate contacts are provided by Leu-260 and Pro-261.

Belongs to the aspartate/ornithine carbamoyltransferase superfamily. ATCase family. As to quaternary structure, heterooligomer of catalytic and regulatory chains.

It catalyses the reaction carbamoyl phosphate + L-aspartate = N-carbamoyl-L-aspartate + phosphate + H(+). It functions in the pathway pyrimidine metabolism; UMP biosynthesis via de novo pathway; (S)-dihydroorotate from bicarbonate: step 2/3. Catalyzes the condensation of carbamoyl phosphate and aspartate to form carbamoyl aspartate and inorganic phosphate, the committed step in the de novo pyrimidine nucleotide biosynthesis pathway. This Saccharolobus islandicus (strain M.14.25 / Kamchatka #1) (Sulfolobus islandicus) protein is Aspartate carbamoyltransferase catalytic subunit.